The following is a 102-amino-acid chain: Putative lipid-transfer protein DIR1 (102 aa).

A signal peptide spans 1-25; it reads MASKKAAMVMMAMIVIMAMLVDTSV. Intrachain disulfides connect Cys30–Cys67, Cys40–Cys56, Cys57–Cys94, and Cys69–Cys102. Gln34 provides a ligand contact to a 1-acyl-sn-glycero-3-phosphocholine. Glu36 serves as a coordination point for Zn(2+). Position 38 (Asn38) interacts with a 1-acyl-sn-glycero-3-phosphocholine. His62 is a binding site for Zn(2+).

This sequence belongs to the A9/FIL1 family. As to quaternary structure, self-interacts and binds to AZI1. Does not interact with PDLP1. Zn(2+) serves as cofactor.

The protein resides in the secreted. It is found in the extracellular space. Its subcellular location is the apoplast. It localises to the endoplasmic reticulum. The protein localises to the cell junction. The protein resides in the plasmodesma. Putative lipid transfer protein required for systemic acquired resistance (SAR) long distance signaling. May interact with a lipid-derived molecule to promote long distance signaling associated with SAR. Together with AZI1, required for glycerol-3-phosphate- (G3P) and azelaic acid- (AA) induced systemic acquired resistance (SAR). Component of plant systemic immunity involved in priming defenses in a AA-dependent manner, by modulating production and/or translocation of a mobile signal(s) during SAR. Is able to bind with high affinity monoacylated phospholipids, mainly lysophosphatidylcholines. This is Putative lipid-transfer protein DIR1 (DIR1) from Arabidopsis thaliana (Mouse-ear cress).